Reading from the N-terminus, the 225-residue chain is 2-C-methyl-D-erythritol 4-phosphate cytidylyltransferase (225 aa).

This sequence belongs to the IspD/TarI cytidylyltransferase family. IspD subfamily.

It carries out the reaction 2-C-methyl-D-erythritol 4-phosphate + CTP + H(+) = 4-CDP-2-C-methyl-D-erythritol + diphosphate. It functions in the pathway isoprenoid biosynthesis; isopentenyl diphosphate biosynthesis via DXP pathway; isopentenyl diphosphate from 1-deoxy-D-xylulose 5-phosphate: step 2/6. Functionally, catalyzes the formation of 4-diphosphocytidyl-2-C-methyl-D-erythritol from CTP and 2-C-methyl-D-erythritol 4-phosphate (MEP). This chain is 2-C-methyl-D-erythritol 4-phosphate cytidylyltransferase, found in Haemophilus influenzae (strain PittGG).